Consider the following 663-residue polypeptide: DNA ligase (663 aa).

NAD(+) is bound by residues 33 to 37 (DQEFD), 82 to 83 (SL), and Glu-113. Lys-115 acts as the N6-AMP-lysine intermediate in catalysis. Residues Arg-136, Glu-170, Lys-286, and Lys-310 each contribute to the NAD(+) site. Residues Cys-404, Cys-407, Cys-422, and Cys-427 each contribute to the Zn(2+) site. A BRCT domain is found at 587–663 (SSDPSLTGKL…IEESDLEDFL (77 aa)).

Belongs to the NAD-dependent DNA ligase family. LigA subfamily. Requires Mg(2+) as cofactor. Mn(2+) serves as cofactor.

The catalysed reaction is NAD(+) + (deoxyribonucleotide)n-3'-hydroxyl + 5'-phospho-(deoxyribonucleotide)m = (deoxyribonucleotide)n+m + AMP + beta-nicotinamide D-nucleotide.. Its function is as follows. DNA ligase that catalyzes the formation of phosphodiester linkages between 5'-phosphoryl and 3'-hydroxyl groups in double-stranded DNA using NAD as a coenzyme and as the energy source for the reaction. It is essential for DNA replication and repair of damaged DNA. This chain is DNA ligase, found in Natranaerobius thermophilus (strain ATCC BAA-1301 / DSM 18059 / JW/NM-WN-LF).